The sequence spans 562 residues: MOB kinase activator-like 2 (562 aa).

A disordered region spans residues 30–50 (KSGSVQGTTATATATGPPSPP). A compositionally biased stretch (low complexity) spans 31 to 45 (SGSVQGTTATATATG). Positions 170, 175, 250, and 255 each coordinate Zn(2+). 3 disordered regions span residues 304 to 378 (DDTS…TASA), 468 to 523 (NFSN…STTV), and 538 to 562 (GASAGGGGNAVSAATGGATSASSTA). 3 stretches are compositionally biased toward low complexity: residues 305 to 349 (DTSG…NSTS), 357 to 378 (NSQSNSNSHSNSSNSHTTTASA), and 471 to 481 (NNNNNNHNLNH). The span at 482–514 (LNHHHHHHHHQHHHQHHPHGHHGHQGHQGHQGH) shows a compositional bias: basic residues. A compositionally biased stretch (low complexity) spans 547–562 (AVSAATGGATSASSTA).

Belongs to the MOB1/phocein family. In terms of assembly, interacts with and activates trc, also interacts with wts.

It localises to the cytoplasm. The protein resides in the nucleus. Functionally, required for the normal morphogenesis of a variety of polarized outgrowths including epidermal hairs, bristles, arista laterals, and dendrites. This is MOB kinase activator-like 2 from Drosophila pseudoobscura pseudoobscura (Fruit fly).